The chain runs to 31 residues: Cytochrome b6-f complex subunit 6 (31 aa).

A helical transmembrane segment spans residues 4 to 26; it reads ITSYFGFLLAALTITSALLIGLN.

It belongs to the PetL family. In terms of assembly, the 4 large subunits of the cytochrome b6-f complex are cytochrome b6, subunit IV (17 kDa polypeptide, PetD), cytochrome f and the Rieske protein, while the 4 small subunits are PetG, PetL, PetM and PetN. The complex functions as a dimer.

It is found in the plastid. The protein resides in the chloroplast thylakoid membrane. Functionally, component of the cytochrome b6-f complex, which mediates electron transfer between photosystem II (PSII) and photosystem I (PSI), cyclic electron flow around PSI, and state transitions. PetL is important for photoautotrophic growth as well as for electron transfer efficiency and stability of the cytochrome b6-f complex. This Amborella trichopoda protein is Cytochrome b6-f complex subunit 6.